We begin with the raw amino-acid sequence, 548 residues long: Uridine-cytidine kinase-like 1 (548 aa).

Low complexity predominate over residues 1 to 18 (MAAPPASMSAAPSPLQSA). Positions 1–74 (MAAPPASMSA…CKSEPPLLRT (74 aa)) are disordered. Phosphoserine is present on residues Ser-56 and Ser-63. Position 105 to 112 (105 to 112 (GGSASGKT)) interacts with ATP. Position 539 is a phosphoserine (Ser-539).

The protein belongs to the uridine kinase family. Interacts with RNF19B. In terms of processing, ubiquitinated by RNF19B; which induces proteasomal degradation.

The protein resides in the cytoplasm. Its subcellular location is the nucleus. It carries out the reaction uridine + ATP = UMP + ADP + H(+). The catalysed reaction is cytidine + ATP = CMP + ADP + H(+). The protein operates within pyrimidine metabolism; UMP biosynthesis via salvage pathway; UMP from uridine: step 1/1. May contribute to UTP accumulation needed for blast transformation and proliferation. The polypeptide is Uridine-cytidine kinase-like 1 (Uckl1) (Mus musculus (Mouse)).